The sequence spans 490 residues: Subtilisin-like protease 8 (490 aa).

Positions 1 to 26 are cleaved as a signal peptide; sequence MKGLLSLSVLPVLAYASPMIVDSIHQ. Positions 27-134 are excised as a propeptide; the sequence is DAAPILSSTN…YIERDSEVRA (108 aa). Positions 43-133 constitute an Inhibitor I9 domain; it reads SYIVVFKKGV…EYIERDSEVR (91 aa). A Peptidase S8 domain is found at 144–450; it reads PWGLARISHR…GGSDNYKEIV (307 aa). Active-site charge relay system residues include aspartate 180 and histidine 212. A glycan (N-linked (GlcNAc...) asparagine) is linked at asparagine 282. The Charge relay system role is filled by serine 378. Asparagine 455 carries N-linked (GlcNAc...) asparagine glycosylation.

This sequence belongs to the peptidase S8 family.

The protein resides in the secreted. In terms of biological role, secreted subtilisin-like serine protease with keratinolytic activity that contributes to pathogenicity. The protein is Subtilisin-like protease 8 (SUB8) of Arthroderma otae (strain ATCC MYA-4605 / CBS 113480) (Microsporum canis).